We begin with the raw amino-acid sequence, 277 residues long: 3-methyl-2-oxobutanoate hydroxymethyltransferase (277 aa).

Residues aspartate 42 and aspartate 81 each coordinate Mg(2+). 3-methyl-2-oxobutanoate-binding positions include 42–43, aspartate 81, and lysine 110; that span reads DS. Glutamate 112 is a Mg(2+) binding site. The active-site Proton acceptor is glutamate 179.

This sequence belongs to the PanB family. As to quaternary structure, homodecamer; pentamer of dimers. The cofactor is Mg(2+).

Its subcellular location is the cytoplasm. The catalysed reaction is 3-methyl-2-oxobutanoate + (6R)-5,10-methylene-5,6,7,8-tetrahydrofolate + H2O = 2-dehydropantoate + (6S)-5,6,7,8-tetrahydrofolate. It participates in cofactor biosynthesis; (R)-pantothenate biosynthesis; (R)-pantoate from 3-methyl-2-oxobutanoate: step 1/2. In terms of biological role, catalyzes the reversible reaction in which hydroxymethyl group from 5,10-methylenetetrahydrofolate is transferred onto alpha-ketoisovalerate to form ketopantoate. This is 3-methyl-2-oxobutanoate hydroxymethyltransferase from Anaplasma marginale (strain St. Maries).